Here is a 902-residue protein sequence, read N- to C-terminus: Chitin synthase 3 (902 aa).

Residues 1-15 (MAYNRLDDDYFDNRR) show a composition bias toward basic and acidic residues. Residues 1-68 (MAYNRLDDDY…MGPGRHTPSD (68 aa)) are disordered. Pro residues predominate over residues 19 to 30 (NRPPPHRTPSPG). N-linked (GlcNAc...) asparagine glycosylation is present at asparagine 80. The disordered stretch occupies residues 104-161 (HHDAYYNPTYTPTPNEAQTPYGEPGYEHDGRPLLPQQDSYGQYSDNPQQQQQQQGGLK). Composition is skewed to polar residues over residues 111-121 (PTYTPTPNEAQ) and 139-150 (QQDSYGQYSDNP). A run of 9 helical transmembrane segments spans residues 449-469 (SAFGFISVLPGAFSAYRYIAL), 547-567 (RWLNGSFFAAIYAIAHFYQFF), 577-597 (IAFFIEFTFNTVNMIFAWFAI), 623-643 (ILGVCFEWLYGVSLITCFVLA), 656-676 (LAMIYFWAIIFCYLLFAAVFI), 699-719 (VVVTLILSIMSTYGIWLVASL), 731-751 (LVQYMLLSPTFTNVLNVYAFC), 830-850 (VVVLLWMVTNFGLAAVVLSTA), and 874-894 (VVLYSVAALSGFKFIGAMWFL).

This sequence belongs to the chitin synthase family. Class II subfamily.

The protein resides in the cell membrane. It catalyses the reaction [(1-&gt;4)-N-acetyl-beta-D-glucosaminyl](n) + UDP-N-acetyl-alpha-D-glucosamine = [(1-&gt;4)-N-acetyl-beta-D-glucosaminyl](n+1) + UDP + H(+). Its function is as follows. Polymerizes chitin, a structural polymer of the cell wall and septum, by transferring the sugar moiety of UDP-GlcNAc to the non-reducing end of the growing chitin polymer. CHS1 and CHS3 have compensatory functions in cell wall modifications in responses to stresses. Might function as a negative regulator on expression of other CHS genes. This Pyricularia oryzae (strain 70-15 / ATCC MYA-4617 / FGSC 8958) (Rice blast fungus) protein is Chitin synthase 3.